Here is a 447-residue protein sequence, read N- to C-terminus: Divalent metal cation transporter MntH (447 aa).

11 consecutive transmembrane segments (helical) span residues 26–48 (AGFW…GYMD), 65–85 (TLLS…AMSA), 108–128 (GFLL…AEII), 140–160 (IPLI…LLLM), 169–189 (AIVA…VLLS), 212–232 (MLYL…LYLG), 264–284 (LFLA…LFYG), 304–324 (IVGA…LLAS), 359–379 (VLSV…EAKI), 383–403 (LTFS…PLVI), and 426–446 (TATI…LGLI).

This sequence belongs to the NRAMP family.

The protein resides in the cell membrane. Its function is as follows. H(+)-stimulated, divalent metal cation uptake system. This Pediococcus pentosaceus (strain ATCC 25745 / CCUG 21536 / LMG 10740 / 183-1w) protein is Divalent metal cation transporter MntH.